Here is a 229-residue protein sequence, read N- to C-terminus: Endo-1,4-beta-xylanase 1 (229 aa).

Residues 1–19 (MVAFSSLICALTSIASTLA) form the signal peptide. The propeptide occupies 20-51 (MPTGLEPESSVNVTERGMYDFVLGAHNDHRRR). Asn-31 is a glycosylation site (N-linked (GlcNAc...) asparagine). One can recognise a GH11 domain in the interval 42–228 (LGAHNDHRRR…GSGSASQSVS (187 aa)). Tyr-117 is a binding site for substrate. Glu-126 functions as the Nucleophile in the catalytic mechanism. Substrate-binding residues include Tyr-128, Arg-160, Pro-164, Gln-174, and Tyr-209. Residue Glu-215 is the Proton donor of the active site.

Belongs to the glycosyl hydrolase 11 (cellulase G) family.

It localises to the secreted. It carries out the reaction Endohydrolysis of (1-&gt;4)-beta-D-xylosidic linkages in xylans.. Its pathway is glycan degradation; xylan degradation. Glycoside hydrolase involved in the hydrolysis of xylan, a major plant cell wall hemicellulose made up of 1,4-beta-linked D-xylopyranose residues. Catalyzes the endohydrolysis of the main-chain 1,4-beta-glycosidic bonds connecting the xylose subunits yielding various xylooligosaccharides and xylose. The sequence is that of Endo-1,4-beta-xylanase 1 from Hypocrea jecorina (strain QM6a) (Trichoderma reesei).